The chain runs to 396 residues: Elongation factor Tu (396 aa).

The tr-type G domain occupies 11–205; that stretch reads KPHVNIGTIG…VIDDYIPTPK (195 aa). Residues 20–27 form a G1 region; the sequence is GHVDHGKT. 20–27 provides a ligand contact to GTP; the sequence is GHVDHGKT. Thr-27 provides a ligand contact to Mg(2+). The interval 61-65 is G2; that stretch reads GITIN. A G3 region spans residues 82 to 85; the sequence is DAPG. Residues 82–86 and 137–140 each bind GTP; these read DAPGH and NKTD. The segment at 137 to 140 is G4; it reads NKTD. Residues 175-177 form a G5 region; the sequence is SAL.

The protein belongs to the TRAFAC class translation factor GTPase superfamily. Classic translation factor GTPase family. EF-Tu/EF-1A subfamily. Monomer.

It is found in the cytoplasm. The enzyme catalyses GTP + H2O = GDP + phosphate + H(+). Functionally, GTP hydrolase that promotes the GTP-dependent binding of aminoacyl-tRNA to the A-site of ribosomes during protein biosynthesis. This is Elongation factor Tu from Limosilactobacillus reuteri (strain DSM 20016) (Lactobacillus reuteri).